The following is a 475-amino-acid chain: Probable phenylalanine--tRNA ligase alpha subunit (475 aa).

Residues 2-151 (TAVAQKIIEN…KRKLVSRRKK (150 aa)) form a contains the major tRNA-Phe binding sites region. L-phenylalanine contacts are provided by residues T309, 351 to 353 (QVE), and Y391. Residue E393 participates in Mg(2+) binding. Position 417 (F417) interacts with L-phenylalanine.

It belongs to the class-II aminoacyl-tRNA synthetase family. Phe-tRNA synthetase alpha subunit type 2 subfamily. In terms of assembly, tetramer of two alpha and two beta subunits. The cofactor is Mg(2+).

Its subcellular location is the cytoplasm. The enzyme catalyses tRNA(Phe) + L-phenylalanine + ATP = L-phenylalanyl-tRNA(Phe) + AMP + diphosphate + H(+). The protein is Probable phenylalanine--tRNA ligase alpha subunit of Encephalitozoon cuniculi (strain GB-M1) (Microsporidian parasite).